A 364-amino-acid chain; its full sequence is Pre-small/secreted glycoprotein (364 aa).

An N-terminal signal peptide occupies residues 1–32; sequence MGVTGILQLPRDRFKRTSFFLWVIILFQRTFS. Asn-40 is a glycosylation site (N-linked (GlcNAc...) asparagine; by host). 2 disulfide bridges follow: Cys-108-Cys-135 and Cys-121-Cys-147. Residues Asn-204, Asn-228, Asn-238, Asn-257, and Asn-268 are each glycosylated (N-linked (GlcNAc...) asparagine; by host).

The protein belongs to the filoviruses glycoprotein family. In terms of assembly, homodimer; disulfide-linked. The homodimers are linked by two disulfide bonds in a parallel orientation. As to quaternary structure, monomer. This precursor is processed into mature sGP and delta-peptide by host furin or furin-like proteases. The cleavage site corresponds to the furin optimal cleavage sequence [KR]-X-[KR]-R. In terms of processing, N-glycosylated. Post-translationally, O-glycosylated.

The protein resides in the secreted. Its function is as follows. Seems to possess an anti-inflammatory activity as it can reverse the barrier-decreasing effects of TNF alpha. Might therefore contribute to the lack of inflammatory reaction seen during infection in spite the of extensive necrosis and massive virus production. Does not seem to be involved in activation of primary macrophages. Does not seem to interact specifically with neutrophils. Viroporin that permeabilizes mammalian cell plasma membranes. It acts by altering permeation of ionic compounds and small molecules. This activity may lead to viral enterotoxic activity. This Zaire ebolavirus (strain Eckron-76) (ZEBOV) protein is Pre-small/secreted glycoprotein (GP).